A 401-amino-acid chain; its full sequence is Phosrestin-1 (401 aa).

S366 bears the Phosphoserine; by CaMK mark.

Belongs to the arrestin family. In terms of processing, phosphorylated upon light exposure. Expressed in photoreceptor cells.

The protein localises to the cell projection. It is found in the rhabdomere. Functionally, regulates photoreceptor cell deactivation. Arr1 and Arr2 proteins are mediators of rhodopsin inactivation and are essential for the termination of the phototransduction cascade. Involved in regulating normal cycles of per nuclear accumulation in brain circadian neurons and thus is important for normal circadian behavior. In the dark, functions with Arr1 to promote the formation of cytosolic Bdbt foci, which are required for dco localization to photoreceptor nuclei where it phosphorylates and activates degradation of per. In Drosophila melanogaster (Fruit fly), this protein is Phosrestin-1 (Arr2).